The primary structure comprises 815 residues: Protein pygopus (815 aa).

2 disordered regions span residues 1-107 and 147-711; these read MTHN…QVSA and GMGG…GPMG. The Nuclear localization signal motif lies at 39-45; sequence PKKRRKT. Residues 46–73 are compositionally biased toward low complexity; that stretch reads SSAANSAAAVAAAAAAAAAANSMQQQQA. A compositionally biased stretch (pro residues) spans 74-86; that stretch reads PPTPQDLLPPPPM. Residues 188 to 199 show a composition bias toward low complexity; the sequence is RGMSPMHPHQMG. Gly residues-rich tracts occupy residues 230 to 248 and 257 to 269; these read PMGG…GMGG and GMGG…GGPN. The segment covering 307-316 has biased composition (pro residues); it reads LGPPSGPGPG. 4 stretches are compositionally biased toward low complexity: residues 323–341, 407–424, 444–478, and 495–545; these read GPQQ…NGQM, SNNN…NQNP, PSVS…VPTS, and GPSP…HQQH. Pro residues predominate over residues 569 to 580; that stretch reads PQQPSHLGPPHP. Residues 602-621 are compositionally biased toward gly residues; sequence GGPGMHGGPAGMPPHMGGGP. The span at 622-636 shows a compositional bias: low complexity; the sequence is NPHMMGGPHGNAGPH. The span at 640–656 shows a compositional bias: gly residues; the sequence is GHMGGVPGPGPGPGGMN. Over residues 663 to 675 the composition is skewed to basic residues; sequence MSPHHGHPHHHHN. The span at 678–711 shows a compositional bias: gly residues; that stretch reads GGPGPNMFGGGGGGPMGPGGPMGNMGPMGGGPMG. The segment at 747 to 805 adopts a PHD-type zinc-finger fold; it reads IYPCGMCHKEVNDNDEAVFCESGCNFFFHRTCVGLTEAAFQMLNKEVFAEWCCDKCVSS.

Binds to BCL9 via the PHD-type zinc finger motif, and thereby becomes part of the nuclear ARM/PAN complex. As to expression, ubiquitous throughout embryogenesis and larval development.

It localises to the nucleus. Functionally, involved in signal transduction through the Wnt pathway. This Drosophila melanogaster (Fruit fly) protein is Protein pygopus (pygo).